A 156-amino-acid polypeptide reads, in one-letter code: ATP synthase subunit b (156 aa).

A helical transmembrane segment spans residues 11 to 31 (AIAFVLFVLFCMKYIWPPIMA).

This sequence belongs to the ATPase B chain family. In terms of assembly, F-type ATPases have 2 components, F(1) - the catalytic core - and F(0) - the membrane proton channel. F(1) has five subunits: alpha(3), beta(3), gamma(1), delta(1), epsilon(1). F(0) has three main subunits: a(1), b(2) and c(10-14). The alpha and beta chains form an alternating ring which encloses part of the gamma chain. F(1) is attached to F(0) by a central stalk formed by the gamma and epsilon chains, while a peripheral stalk is formed by the delta and b chains.

Its subcellular location is the cell inner membrane. In terms of biological role, f(1)F(0) ATP synthase produces ATP from ADP in the presence of a proton or sodium gradient. F-type ATPases consist of two structural domains, F(1) containing the extramembraneous catalytic core and F(0) containing the membrane proton channel, linked together by a central stalk and a peripheral stalk. During catalysis, ATP synthesis in the catalytic domain of F(1) is coupled via a rotary mechanism of the central stalk subunits to proton translocation. Component of the F(0) channel, it forms part of the peripheral stalk, linking F(1) to F(0). The chain is ATP synthase subunit b from Yersinia enterocolitica serotype O:8 / biotype 1B (strain NCTC 13174 / 8081).